The primary structure comprises 400 residues: Putative F-box protein At1g30920 (400 aa).

The region spanning 4–49 is the F-box domain; sequence EENTDSIPIDLILDILSRLPSKSIARCRCVSKLWESMIRQSYFTEL.

This chain is Putative F-box protein At1g30920, found in Arabidopsis thaliana (Mouse-ear cress).